The following is a 294-amino-acid chain: UDP-3-O-acyl-N-acetylglucosamine deacetylase (294 aa).

Residues His-75, His-232, and Asp-236 each coordinate Zn(2+). Residue His-259 is the Proton donor of the active site.

It belongs to the LpxC family. Zn(2+) is required as a cofactor.

The catalysed reaction is a UDP-3-O-[(3R)-3-hydroxyacyl]-N-acetyl-alpha-D-glucosamine + H2O = a UDP-3-O-[(3R)-3-hydroxyacyl]-alpha-D-glucosamine + acetate. It participates in glycolipid biosynthesis; lipid IV(A) biosynthesis; lipid IV(A) from (3R)-3-hydroxytetradecanoyl-[acyl-carrier-protein] and UDP-N-acetyl-alpha-D-glucosamine: step 2/6. Functionally, catalyzes the hydrolysis of UDP-3-O-myristoyl-N-acetylglucosamine to form UDP-3-O-myristoylglucosamine and acetate, the committed step in lipid A biosynthesis. The polypeptide is UDP-3-O-acyl-N-acetylglucosamine deacetylase (Campylobacter concisus (strain 13826)).